A 332-amino-acid chain; its full sequence is Ketol-acid reductoisomerase (NADP(+)) 1 (332 aa).

Positions A2–T182 constitute a KARI N-terminal Rossmann domain. NADP(+) contacts are provided by residues Y25–Q28, S51, S53, and D83–Q86. H108 is an active-site residue. G134 contacts NADP(+). A KARI C-terminal knotted domain is found at T183–V328. Mg(2+) is bound by residues D191, E195, E227, and E231. Residue S252 participates in substrate binding.

The protein belongs to the ketol-acid reductoisomerase family. The cofactor is Mg(2+).

The catalysed reaction is (2R)-2,3-dihydroxy-3-methylbutanoate + NADP(+) = (2S)-2-acetolactate + NADPH + H(+). It catalyses the reaction (2R,3R)-2,3-dihydroxy-3-methylpentanoate + NADP(+) = (S)-2-ethyl-2-hydroxy-3-oxobutanoate + NADPH + H(+). Its pathway is amino-acid biosynthesis; L-isoleucine biosynthesis; L-isoleucine from 2-oxobutanoate: step 2/4. The protein operates within amino-acid biosynthesis; L-valine biosynthesis; L-valine from pyruvate: step 2/4. Involved in the biosynthesis of branched-chain amino acids (BCAA). Catalyzes an alkyl-migration followed by a ketol-acid reduction of (S)-2-acetolactate (S2AL) to yield (R)-2,3-dihydroxy-isovalerate. In the isomerase reaction, S2AL is rearranged via a Mg-dependent methyl migration to produce 3-hydroxy-3-methyl-2-ketobutyrate (HMKB). In the reductase reaction, this 2-ketoacid undergoes a metal-dependent reduction by NADPH to yield (R)-2,3-dihydroxy-isovalerate. The polypeptide is Ketol-acid reductoisomerase (NADP(+)) 1 (Streptomyces coelicolor (strain ATCC BAA-471 / A3(2) / M145)).